The sequence spans 261 residues: uncharacterized protein (261 aa).

A run of 2 helical transmembrane segments spans residues 4–21 (RLIAIATFVVTFGILIVL) and 33–55 (FSILSILAAVLTIAAYFFTLVLF).

The protein localises to the cell membrane. This is an uncharacterized protein from Archaeoglobus fulgidus (strain ATCC 49558 / DSM 4304 / JCM 9628 / NBRC 100126 / VC-16).